A 264-amino-acid polypeptide reads, in one-letter code: 3-methyl-2-oxobutanoate hydroxymethyltransferase (264 aa).

Residues aspartate 45 and aspartate 84 each coordinate Mg(2+). 3-methyl-2-oxobutanoate contacts are provided by residues 45-46 (DS), aspartate 84, and lysine 112. Glutamate 114 is a binding site for Mg(2+). Glutamate 181 serves as the catalytic Proton acceptor.

The protein belongs to the PanB family. In terms of assembly, homodecamer; pentamer of dimers. It depends on Mg(2+) as a cofactor.

Its subcellular location is the cytoplasm. It carries out the reaction 3-methyl-2-oxobutanoate + (6R)-5,10-methylene-5,6,7,8-tetrahydrofolate + H2O = 2-dehydropantoate + (6S)-5,6,7,8-tetrahydrofolate. It participates in cofactor biosynthesis; (R)-pantothenate biosynthesis; (R)-pantoate from 3-methyl-2-oxobutanoate: step 1/2. Catalyzes the reversible reaction in which hydroxymethyl group from 5,10-methylenetetrahydrofolate is transferred onto alpha-ketoisovalerate to form ketopantoate. In Escherichia coli O17:K52:H18 (strain UMN026 / ExPEC), this protein is 3-methyl-2-oxobutanoate hydroxymethyltransferase.